A 62-amino-acid chain; its full sequence is Beta-defensin 10 (62 aa).

Positions 1-22 (MRLHHLLLLLLLVVLSSGSGFT) are cleaved as a signal peptide. Gln-23 bears the Pyrrolidone carboxylic acid mark. Disulfide bonds link Cys-31–Cys-60, Cys-38–Cys-53, and Cys-43–Cys-61.

Belongs to the beta-defensin family. Neutrophilic granules.

It localises to the secreted. Its function is as follows. Has bactericidal activity. Active against E.coli ML35 and S.aureus 502A. The sequence is that of Beta-defensin 10 (DEFB10) from Bos taurus (Bovine).